A 122-amino-acid chain; its full sequence is Small ribosomal subunit protein uS13 (122 aa).

Residues 97–122 (PVRGQRTKTNARTRKGPARTVAGKKK) are disordered.

It belongs to the universal ribosomal protein uS13 family. Part of the 30S ribosomal subunit. Forms a loose heterodimer with protein S19. Forms two bridges to the 50S subunit in the 70S ribosome.

Located at the top of the head of the 30S subunit, it contacts several helices of the 16S rRNA. In the 70S ribosome it contacts the 23S rRNA (bridge B1a) and protein L5 of the 50S subunit (bridge B1b), connecting the 2 subunits; these bridges are implicated in subunit movement. Contacts the tRNAs in the A and P-sites. This chain is Small ribosomal subunit protein uS13, found in Pelobacter propionicus (strain DSM 2379 / NBRC 103807 / OttBd1).